The primary structure comprises 182 residues: Adenine phosphoribosyltransferase (182 aa).

The protein belongs to the purine/pyrimidine phosphoribosyltransferase family. Homodimer.

Its subcellular location is the cytoplasm. The enzyme catalyses AMP + diphosphate = 5-phospho-alpha-D-ribose 1-diphosphate + adenine. The protein operates within purine metabolism; AMP biosynthesis via salvage pathway; AMP from adenine: step 1/1. Catalyzes a salvage reaction resulting in the formation of AMP, that is energically less costly than de novo synthesis. The chain is Adenine phosphoribosyltransferase from Campylobacter hominis (strain ATCC BAA-381 / DSM 21671 / CCUG 45161 / LMG 19568 / NCTC 13146 / CH001A).